The primary structure comprises 367 residues: 3-ketodihydrosphingosine reductase ksrA (367 aa).

Residues 12-32 (ASPATLGISLILCGFIVYSVS) form a helical membrane-spanning segment. Residues G53, S55, G57, R78, K82, D108, and L109 each contribute to the NADPH site. The short motif at 53 to 57 (GGSDG) is the GXSXG element. Residues 193–213 (LIFTCSTLAFVSIAGYAPYSP) form a helical membrane-spanning segment. The active-site Proton acceptor is Y211. Y211, K215, and I259 together coordinate NADP(+). Catalysis depends on K215, which acts as the Lowers pKa of active site Tyr.

The protein belongs to the short-chain dehydrogenases/reductases (SDR) family.

Its subcellular location is the endoplasmic reticulum membrane. The catalysed reaction is sphinganine + NADP(+) = 3-oxosphinganine + NADPH + H(+). It functions in the pathway lipid metabolism; sphingolipid metabolism. Catalyzes the reduction of 3'-oxosphinganine (3-ketodihydrosphingosine/KDS) to sphinganine (dihydrosphingosine/DHS), the second step of de novo sphingolipid biosynthesis. The protein is 3-ketodihydrosphingosine reductase ksrA of Aspergillus fumigatus (strain ATCC MYA-4609 / CBS 101355 / FGSC A1100 / Af293) (Neosartorya fumigata).